The sequence spans 149 residues: SsrA-binding protein (149 aa).

Belongs to the SmpB family.

It localises to the cytoplasm. Its function is as follows. Required for rescue of stalled ribosomes mediated by trans-translation. Binds to transfer-messenger RNA (tmRNA), required for stable association of tmRNA with ribosomes. tmRNA and SmpB together mimic tRNA shape, replacing the anticodon stem-loop with SmpB. tmRNA is encoded by the ssrA gene; the 2 termini fold to resemble tRNA(Ala) and it encodes a 'tag peptide', a short internal open reading frame. During trans-translation Ala-aminoacylated tmRNA acts like a tRNA, entering the A-site of stalled ribosomes, displacing the stalled mRNA. The ribosome then switches to translate the ORF on the tmRNA; the nascent peptide is terminated with the 'tag peptide' encoded by the tmRNA and targeted for degradation. The ribosome is freed to recommence translation, which seems to be the essential function of trans-translation. This is SsrA-binding protein from Anaplasma marginale (strain Florida).